Consider the following 596-residue polypeptide: Delta(24(24(1)))-sterol reductase (596 aa).

Residues 1-122 (MSSRYSLRQT…GHATNGHATS (122 aa)) form a disordered region. Residues 98–112 (NGNGNGYTNGHGNGN) show a composition bias toward gly residues. 8 helical membrane passes run 168-188 (FGTA…WIGA), 225-245 (VWAW…LLPG), 269-289 (WSLY…IWPL), 296-316 (FGPL…VAYF), 353-373 (MFFE…GTAA), 381-401 (YVSG…NACA), 419-439 (GFML…HCTI), and 454-474 (GILA…DSCN). Residues Lys477, Arg481, Leu516, and 528–529 (HY) each bind NADP(+). A helical membrane pass occupies residues 535–557 (FAVSWGLITGFESPFPWFYPVFF). Residues Asp568, 572–576 (CRRKY), and Tyr583 contribute to the NADP(+) site.

This sequence belongs to the ERG4/ERG24 family.

It is found in the endoplasmic reticulum membrane. The catalysed reaction is ergosterol + NADP(+) = ergosta-5,7,22,24(28)-tetraen-3beta-ol + NADPH + H(+). Its pathway is steroid metabolism; ergosterol biosynthesis. Functionally, delta(24(24(1)))-sterol reductase; part of the third module of ergosterol biosynthesis pathway that includes the late steps of the pathway. ERG4 catalyzes the last step of ergosterol biosynthesis by converting ergosta-5,7,22,24(28)-tetraen-3beta-ol into ergosterol. The third module or late pathway involves the ergosterol synthesis itself through consecutive reactions that mainly occur in the endoplasmic reticulum (ER) membrane. Firstly, the squalene synthase ERG9 catalyzes the condensation of 2 farnesyl pyrophosphate moieties to form squalene, which is the precursor of all steroids. Squalene synthase is crucial for balancing the incorporation of farnesyl diphosphate (FPP) into sterol and nonsterol isoprene synthesis. Secondly, squalene is converted into lanosterol by the consecutive action of the squalene epoxidase ERG1 and the lanosterol synthase ERG7. Then, the delta(24)-sterol C-methyltransferase ERG6 methylates lanosterol at C-24 to produce eburicol. Eburicol is the substrate of the sterol 14-alpha demethylase encoded by CYP51A, CYP51B and CYP51C, to yield 4,4,24-trimethyl ergosta-8,14,24(28)-trienol. CYP51B encodes the enzyme primarily responsible for sterol 14-alpha-demethylation, and plays an essential role in ascospore formation. CYP51A encodes an additional sterol 14-alpha-demethylase, induced on ergosterol depletion and responsible for the intrinsic variation in azole sensitivity. The third CYP51 isoform, CYP51C, does not encode a sterol 14-alpha-demethylase, but is required for full virulence on host wheat ears. The C-14 reductase ERG24 then reduces the C14=C15 double bond which leads to 4,4-dimethylfecosterol. A sequence of further demethylations at C-4, involving the C-4 demethylation complex containing the C-4 methylsterol oxidases ERG25, the sterol-4-alpha-carboxylate 3-dehydrogenase ERG26 and the 3-keto-steroid reductase ERG27, leads to the production of fecosterol via 4-methylfecosterol. ERG28 has a role as a scaffold to help anchor ERG25, ERG26 and ERG27 to the endoplasmic reticulum. The C-8 sterol isomerase ERG2 then catalyzes the reaction which results in unsaturation at C-7 in the B ring of sterols and thus converts fecosterol to episterol. The sterol-C5-desaturases ERG3A and ERG3BB then catalyze the introduction of a C-5 double bond in the B ring to produce 5-dehydroepisterol. The C-22 sterol desaturases ERG5A and ERG5B further convert 5-dehydroepisterol into ergosta-5,7,22,24(28)-tetraen-3beta-ol by forming the C-22(23) double bond in the sterol side chain. Finally, ergosta-5,7,22,24(28)-tetraen-3beta-ol is substrate of the C-24(28) sterol reductase ERG4 to produce ergosterol. The protein is Delta(24(24(1)))-sterol reductase of Gibberella zeae (strain ATCC MYA-4620 / CBS 123657 / FGSC 9075 / NRRL 31084 / PH-1) (Wheat head blight fungus).